The sequence spans 495 residues: Catalase (495 aa).

The disordered stretch occupies residues 1–25 (MSNNKKLTSLFGAPVSDRENSMTAG). Catalysis depends on residues His-55 and Asn-128. Heme is bound at residue Tyr-338.

It belongs to the catalase family. As to quaternary structure, homodimer. Heme serves as cofactor.

The enzyme catalyses 2 H2O2 = O2 + 2 H2O. Functionally, decomposes hydrogen peroxide into water and oxygen; serves to protect cells from the toxic effects of hydrogen peroxide. This is Catalase (katA) from Staphylococcus saprophyticus subsp. saprophyticus (strain ATCC 15305 / DSM 20229 / NCIMB 8711 / NCTC 7292 / S-41).